The chain runs to 220 residues: Ras-related protein Rab-3A (220 aa).

GTP is bound by residues Ser-31, Ser-32, Val-33, Gly-34, Lys-35, Thr-36, Ser-37, Thr-48, Pro-49, Ser-53, and Thr-54. Thr-36 contributes to the Mg(2+) binding site. The Switch 1 motif lies at 49 to 58 (PAFVSTVGID). Residues Thr-54 and Asp-77 each coordinate Mg(2+). Gly-80 lines the GTP pocket. A Switch 2 motif is present at residues 80 to 96 (GQERYRTITTAYYRGAM). Position 86 is a phosphothreonine; by LRRK2 (Thr-86). GTP contacts are provided by Asn-135, Lys-136, Asp-138, Ala-166, and Lys-167. Ser-188 and Ser-190 each carry phosphoserine. Residues 194-220 (ADPAVTGAKQGPQLSDQQVPPHQDCAC) are disordered. S-geranylgeranyl cysteine attachment occurs at residues Cys-218 and Cys-220. Cys-220 is modified (cysteine methyl ester).

Belongs to the small GTPase superfamily. Rab family. In terms of assembly, interacts with RIMS1 and RIMS2. Interacts with Rabphilin-3A/RPH3A and Rab effector Noc2/RPH3AL. Interacts with SYTL4. Interacts with RAB3IP. Interacts with SGSM1 and SGSM3. Interacts with SYT1. Interacts with MYH9; this interaction is essential for lysosome exocytosis and plasma membrane repair. Interacts with STXBP1; this interaction promotes RAB3A dissociation from the vesicle membrane. Interacts with SNCA. The GTP-bound form interacts with REP15. Interacts with GDI1, GDI2, CHM and CHML; phosphorylation at Thr-86 disrupts these interactions. Interacts with MADD (via uDENN domain); the GTP-bound form is preferred for interaction. It depends on Mg(2+) as a cofactor. Phosphorylation of Thr-86 in the switch II region by LRRK2 prevents the association of RAB regulatory proteins, including CHM, CHML and RAB GDP dissociation inhibitors GDI1 and GDI2. In terms of tissue distribution, specifically expressed in brain.

It is found in the cytoplasm. The protein resides in the cytosol. Its subcellular location is the lysosome. The protein localises to the cytoplasmic vesicle. It localises to the secretory vesicle. It is found in the cell projection. The protein resides in the axon. Its subcellular location is the cell membrane. The protein localises to the presynapse. It localises to the postsynapse. The catalysed reaction is GTP + H2O = GDP + phosphate + H(+). Regulated by guanine nucleotide exchange factors (GEFs) including RAB3IL1 and MADD which promote the exchange of bound GDP for free GTP. Regulated by GTPase activating proteins (GAPs) including RAB3GAP1 and TBC1D10B which increase the GTP hydrolysis activity. Inhibited by GDP dissociation inhibitors (GDIs) which prevent Rab-GDP dissociation. Functionally, the small GTPases Rab are key regulators of intracellular membrane trafficking, from the formation of transport vesicles to their fusion with membranes. Rabs cycle between an inactive GDP-bound form and an active GTP-bound form that is able to recruit to membranes different sets of downstream effectors directly responsible for vesicle formation, movement, tethering and fusion. RAB3A plays a central role in regulated exocytosis and secretion. Controls the recruitment, tethering and docking of secretory vesicles to the plasma membrane. Upon stimulation, switches to its active GTP-bound form, cycles to vesicles and recruits effectors such as RIMS1, RIMS2, Rabphilin-3A/RPH3A, RPH3AL or SYTL4 to help the docking of vesicules onto the plasma membrane. Upon GTP hydrolysis by GTPase-activating protein, dissociates from the vesicle membrane allowing the exocytosis to proceed. Stimulates insulin secretion through interaction with RIMS2 or RPH3AL effectors in pancreatic beta cells. Regulates calcium-dependent lysosome exocytosis and plasma membrane repair (PMR) via the interaction with 2 effectors, SYTL4 and myosin-9/MYH9. Acts as a positive regulator of acrosome content secretion in sperm cells by interacting with RIMS1. Also plays a role in the regulation of dopamine release by interacting with synaptotagmin I/SYT. This chain is Ras-related protein Rab-3A, found in Homo sapiens (Human).